The following is a 365-amino-acid chain: Flagellar P-ring protein 2 (365 aa).

A signal peptide spans 1 to 19 (MKKWIVMASLLLAALPAMS).

Belongs to the FlgI family. The basal body constitutes a major portion of the flagellar organelle and consists of four rings (L,P,S, and M) mounted on a central rod.

The protein resides in the periplasm. Its subcellular location is the bacterial flagellum basal body. In terms of biological role, assembles around the rod to form the L-ring and probably protects the motor/basal body from shearing forces during rotation. This is Flagellar P-ring protein 2 from Chromobacterium violaceum (strain ATCC 12472 / DSM 30191 / JCM 1249 / CCUG 213 / NBRC 12614 / NCIMB 9131 / NCTC 9757 / MK).